We begin with the raw amino-acid sequence, 248 residues long: Small ribosomal subunit protein uS2 (248 aa).

This sequence belongs to the universal ribosomal protein uS2 family.

This chain is Small ribosomal subunit protein uS2, found in Thiobacillus denitrificans (strain ATCC 25259 / T1).